Consider the following 310-residue polypeptide: ADP-L-glycero-D-manno-heptose-6-epimerase (310 aa).

Residues 10–11, 31–32, Lys-38, Lys-53, 75–79, and Asn-92 each bind NADP(+); these read FI, DN, and EGACS. Residue Tyr-140 is the Proton acceptor of the active site. Residue Lys-144 participates in NADP(+) binding. Asn-169 serves as a coordination point for substrate. NADP(+) is bound by residues Val-170 and Lys-178. Lys-178 (proton acceptor) is an active-site residue. Residues Ser-180, His-187, 201-204, Arg-209, and Tyr-272 contribute to the substrate site; that span reads FEGS.

This sequence belongs to the NAD(P)-dependent epimerase/dehydratase family. HldD subfamily. In terms of assembly, homopentamer. The cofactor is NADP(+).

It carries out the reaction ADP-D-glycero-beta-D-manno-heptose = ADP-L-glycero-beta-D-manno-heptose. It participates in nucleotide-sugar biosynthesis; ADP-L-glycero-beta-D-manno-heptose biosynthesis; ADP-L-glycero-beta-D-manno-heptose from D-glycero-beta-D-manno-heptose 7-phosphate: step 4/4. Its function is as follows. Catalyzes the interconversion between ADP-D-glycero-beta-D-manno-heptose and ADP-L-glycero-beta-D-manno-heptose via an epimerization at carbon 6 of the heptose. The chain is ADP-L-glycero-D-manno-heptose-6-epimerase from Klebsiella pneumoniae (strain 342).